The following is a 447-amino-acid chain: Probable butyrate:acetyl-CoA coenzyme A-transferase (447 aa).

220–224 contacts CoA; it reads GIGGT. Glu245 functions as the 5-glutamyl coenzyme A thioester intermediate in the catalytic mechanism. Residues Ile320 and Gly343 each contribute to the CoA site.

Belongs to the acetyl-CoA hydrolase/transferase family.

The protein localises to the cytoplasm. It carries out the reaction butanoate + acetyl-CoA = butanoyl-CoA + acetate. Its pathway is lipid metabolism; butanoate metabolism. In terms of biological role, coenzyme A-transferase that converts butyrate to butyryl-CoA. Involved in the syntrophic growth of S.wolfei on butyrate in cooperation with methanogens or an appropriate hydrogen-scavenging bacterium, as part of the butyrate oxidation pathway. This is Probable butyrate:acetyl-CoA coenzyme A-transferase from Syntrophomonas wolfei subsp. wolfei (strain DSM 2245B / Goettingen).